The following is a 147-amino-acid chain: Antiholin-like protein LrgA (147 aa).

4 helical membrane passes run 12 to 32 (PAHFFHQVIVIALVLFVSKII), 35 to 55 (FMPIPMPASVIGLVLLFVLLC), 74 to 94 (NIGLLFVPAGISVVNSLGVIS), and 98 to 118 (FLIIGLIIVSTILLLICTGYV).

Belongs to the CidA/LrgA family. LrgA subfamily.

It localises to the cell membrane. In terms of biological role, inhibits the expression or activity of extracellular murein hydrolases by interacting, possibly with LrgB, with the holin-like proteins CidA and/or CidB. The LrgAB and CidAB proteins may affect the proton motive force of the membrane. May be involved in programmed cell death (PCD), possibly triggering PCD in response to antibiotics and environmental stresses. In Staphylococcus aureus (strain USA300), this protein is Antiholin-like protein LrgA.